A 465-amino-acid chain; its full sequence is MFIYDTKSKQKVPFEPLVQNKANIYVCGPTVYDDAHLGHARSAIAFDLLRRTLELSGYEVVLVRNFTDIDDKIINKAFKENKSIQELSSIYIESYTRDLNALNVKKPSLEPKASEYLDAMVRMIETLLEKNFAYQVSNGDIYLDTSKDKDYGSLSMHNSSVEFSRIGLVQEKRLEQDFVLWKSYKGDNDVGFDSPLGKGRPGWHIECSSMVFETLALANAPYQIDIHAGGADLLFPHHENEACQTRCAFGVELAKYWMHNGFVNINNEKMSKSLGNSFFIKDALKNYDGEILRNYLLGVHYRSVLNFNEEDLLVSKKRLDKIYRLKQRVLGTLGGINPNFKKEILECMQDDLNVSKALSVLESMLSSTNEKLDQNPKNKALKGEILANLKFIEELLGIGVKDPSAYFQLGVSESEKQEIENKIEERKRAKEQKDFLKADSIREELLNHKIALMDTPQGTIWEKLF.

A Zn(2+)-binding site is contributed by cysteine 27. The short motif at 29–39 (PTVYDDAHLGH) is the 'HIGH' region element. Zn(2+)-binding residues include cysteine 207, histidine 237, and glutamate 241. The short motif at 269 to 273 (KMSKS) is the 'KMSKS' region element. Lysine 272 serves as a coordination point for ATP.

This sequence belongs to the class-I aminoacyl-tRNA synthetase family. Monomer. Requires Zn(2+) as cofactor.

Its subcellular location is the cytoplasm. It carries out the reaction tRNA(Cys) + L-cysteine + ATP = L-cysteinyl-tRNA(Cys) + AMP + diphosphate. The sequence is that of Cysteine--tRNA ligase from Helicobacter pylori (strain P12).